Here is a 609-residue protein sequence, read N- to C-terminus: MASKEEERTGQRPSISMYDPARDRWEEQPVVPAEPASASASIEATPTQTSEAKPVHDSTVTSTSESLHLPQTTTIEPSQQPEQQQKQPPIPTPPSSQSRRKHKINKMGDYYRSGSADAYAEQSSPAADSHKRKLEDETSEQQPPADQANDRPISKRKRLEERHQKLRKRGQAPPSAYSRRDGDETAARAAPRPRSPSPPLPPRSPSPEVQARQRKRPGGGARRGLVDPQTLRRRQEERERALEEDAMRNSQSRGVTDIVRQHYNAVPQRGREWRKTESKIKGLRSFNNWVKSTLIQKFSPDEEFEKRLLVIDLGCGKGGDLGKWQLAPQPVDLYVGLDPAEVSIIQARERYAGMRSGRGPRGGRRGGPPLFHGEFRSKDCFGEWLGDVDIVQQVGIDPNVGPGGSMMASRWGGGGFDVVTSMFAIHYAFESEEKARQMLRNVAGCLKKGGRFIGVCPNSDIISARVEEEAKAEWGNSIYRVRFPGDTPEDGIFRPPFGWKYSYFMEEAVGEIPEYVVPWEAFRALTEEYNLELQYRKPFMEVWRDEKDDPELGPLSERMGVRDRTTGELTMTPEEQEAVSKYTPLGFTSAEGESANGTGFYHAFCFYKV.

Residues 1–10 (MASKEEERTG) are compositionally biased toward basic and acidic residues. The tract at residues 1–252 (MASKEEERTG…EEDAMRNSQS (252 aa)) is disordered. Composition is skewed to low complexity over residues 28 to 47 (QPVV…ATPT) and 70 to 87 (PQTT…QQKQ). Residues 148–163 (ANDRPISKRKRLEERH) are compositionally biased toward basic and acidic residues. Pro residues predominate over residues 193–205 (PRSPSPPLPPRSP). A compositionally biased stretch (basic and acidic residues) spans 233 to 247 (RRQEERERALEEDAM). An mRNA cap 0 methyltransferase domain is found at 278-590 (SKIKGLRSFN…KYTPLGFTSA (313 aa)). 287–288 (NN) serves as a coordination point for mRNA. S-adenosyl-L-methionine contacts are provided by residues K291, G314, D338, D379, 422-424 (MFA), and Y427.

Belongs to the class I-like SAM-binding methyltransferase superfamily. mRNA cap 0 methyltransferase family.

It is found in the nucleus. The catalysed reaction is a 5'-end (5'-triphosphoguanosine)-ribonucleoside in mRNA + S-adenosyl-L-methionine = a 5'-end (N(7)-methyl 5'-triphosphoguanosine)-ribonucleoside in mRNA + S-adenosyl-L-homocysteine. Its function is as follows. Responsible for methylating the 5'-cap structure of mRNAs. This Aspergillus niger (strain ATCC MYA-4892 / CBS 513.88 / FGSC A1513) protein is mRNA cap guanine-N(7) methyltransferase (abd1).